We begin with the raw amino-acid sequence, 153 residues long: Cytochrome c-554 (153 aa).

A signal peptide spans 1-20 (MRPIPALALTFSLVAMPALA). The residue at position 21 (Q21) is a Pyrrolidone carboxylic acid. Heme c contacts are provided by M37, C142, C145, and H146.

In terms of processing, binds 1 heme c group covalently per subunit.

Its subcellular location is the periplasm. Its function is as follows. Monoheme c-type cytochrome, that is particularly expressed when cells generate energy via aerobic respiration. The chain is Cytochrome c-554 (cycF) from Cereibacter sphaeroides (strain ATCC 17023 / DSM 158 / JCM 6121 / CCUG 31486 / LMG 2827 / NBRC 12203 / NCIMB 8253 / ATH 2.4.1.) (Rhodobacter sphaeroides).